The primary structure comprises 115 residues: Type 3 secretion system chaperone YscG (115 aa).

Belongs to the YscG family. Component of the heterodimeric YscE-YscG chaperone. The YscE-YscG chaperone forms a stable ternary complex with YscF/SctF.

Its subcellular location is the cytoplasm. Chaperone of the type III secretion system (T3SS), also called injectisome, which is used to inject bacterial effector proteins into eukaryotic host cells. Along with YscE, prevents premature polymerization of the YscF/SctF needle protein within the cytoplasm. Required for Yop secretion. In Yersinia enterocolitica, this protein is Type 3 secretion system chaperone YscG.